The chain runs to 348 residues: Lysophosphatidic acid receptor 2 (348 aa).

The Extracellular portion of the chain corresponds to 1–30 (MGHCYYNETIGFFYNNSGKELSSHWRPKDV). N-linked (GlcNAc...) asparagine glycosylation is found at asparagine 7 and asparagine 15. The helical transmembrane segment at 31-51 (VVVALGLTVSVLVLLTNLLVI) threads the bilayer. Over 52-66 (AAIASNRRFHQPIYY) the chain is Cytoplasmic. A helical transmembrane segment spans residues 67-87 (LLGNLAAADLFAGVAYLFLMF). Topologically, residues 88 to 104 (HTGPRTARLSLEGWFLR) are extracellular. Residues 105–124 (QGLLDTSLTASVATLLAIAV) form a helical membrane-spanning segment. At 125-143 (ERRRSVMAVQLHSRLPRGR) the chain is on the cytoplasmic side. The helical transmembrane segment at 144–164 (VVMLIVGVWVAALGLGLLPAH) threads the bilayer. The Extracellular portion of the chain corresponds to 165–185 (SWHCLCALDRCSRMAPLLSRS). A helical membrane pass occupies residues 186 to 206 (YLAVWALSSLLVFLLMVAVYT). Residues 207–239 (RIFFYVRRRVQRMAEHVSCHPRYRETTLSLVKT) are Cytoplasmic-facing. Residues 240–260 (VVIILGAFVVCWTPGQVVLLL) form a helical membrane-spanning segment. Residues 261-276 (DGLGCKSCNVLAVEKY) are Extracellular-facing. Residues 277–294 (FLLLAEANSLVNAAVYSC) form a helical membrane-spanning segment. Residues 295 to 348 (RDAEMRRTFRRLLCCACLRRSTRESAHYTSSAQGGASTRIMLPENGHPLMDSTL) are Cytoplasmic-facing. Residue cysteine 308 is the site of S-palmitoyl cysteine attachment. Positions 345–348 (DSTL) match the PDZ-binding motif.

Belongs to the G-protein coupled receptor 1 family. In terms of assembly, interacts with SLC9A3R2/NHERF2, MAGI3 and PLCB3. Interacts with RALA and GRK2.

It localises to the cell surface. It is found in the cell membrane. Functionally, receptor for lysophosphatidic acid (LPA), a mediator of diverse cellular activities. Seems to be coupled to the G(i)/G(o), G(12)/G(13), and G(q) families of heteromeric G proteins. Plays a key role in phospholipase C-beta (PLC-beta) signaling pathway. Stimulates phospholipase C (PLC) activity in a manner that is independent of RALA activation. In Macaca fascicularis (Crab-eating macaque), this protein is Lysophosphatidic acid receptor 2.